Here is a 286-residue protein sequence, read N- to C-terminus: DegV domain-containing protein M6_Spy1658 (286 aa).

Residues 3-282 form the DegV domain; it reads FTIMTDSTAD…PNTLAVFVIG (280 aa). The hexadecanoate site is built by Thr-62 and Ser-94.

Its function is as follows. May bind long-chain fatty acids, such as palmitate, and may play a role in lipid transport or fatty acid metabolism. The chain is DegV domain-containing protein M6_Spy1658 from Streptococcus pyogenes serotype M6 (strain ATCC BAA-946 / MGAS10394).